The following is a 165-amino-acid chain: RxLR effector protein PITG_09218 (165 aa).

A signal peptide spans 1-24; the sequence is MRFSAFLTLLLVAFVASCSTFASA. Positions 31 to 57 match the RxLR-dEER motif; that stretch reads RRLRADAAPVPVNKDNVAKLAGGFLEK. A helical transmembrane segment spans residues 129 to 149; the sequence is VTLGATVAGFAIYGAYKALFD.

This sequence belongs to the RxLR effector family.

It localises to the secreted. The protein localises to the host mitochondrion membrane. It is found in the host endoplasmic reticulum membrane. Functionally, effector that enhances P.infestans colonization of Nicotiana benthamiana leaves. The protein is RxLR effector protein PITG_09218 of Phytophthora infestans (strain T30-4) (Potato late blight agent).